We begin with the raw amino-acid sequence, 348 residues long: D-alanine--D-alanine ligase (348 aa).

The ATP-grasp domain occupies K132 to R334. An ATP-binding site is contributed by E162 to E217. The Mg(2+) site is built by D288, E301, and N303.

Belongs to the D-alanine--D-alanine ligase family. Requires Mg(2+) as cofactor. Mn(2+) serves as cofactor.

It localises to the cytoplasm. It carries out the reaction 2 D-alanine + ATP = D-alanyl-D-alanine + ADP + phosphate + H(+). Its pathway is cell wall biogenesis; peptidoglycan biosynthesis. In terms of biological role, cell wall formation. The sequence is that of D-alanine--D-alanine ligase from Streptococcus equi subsp. zooepidemicus (strain MGCS10565).